The sequence spans 333 residues: Trans-enoyl reductase apdC (333 aa).

Residue Phe45 to Lys48 coordinates NADP(+). Val131–Met138 provides a ligand contact to substrate. NADP(+) contacts are provided by residues Ser167–Asn170, Tyr185, and Leu232–Asp233. Ser252–Tyr256 contributes to the substrate binding site. Val321–Ser322 contacts NADP(+).

It belongs to the zinc-containing alcohol dehydrogenase family. As to quaternary structure, monomer.

Its pathway is secondary metabolite biosynthesis. Trans-enoyl reductase; part of the gene cluster that mediates the biosynthesis of aspyridones. The polyketide-amino acid backbone preaspyridone A is first assembled by the PKS-NRPS hybrid apdA. The assembly of preaspyridone A is initiated by loading of malonyl-CoA onto apdA, followed by decarboxylation to yield the acetyl starter unit. The growing polyketide chain then elongates into a tetraketide. The adpA PKS module catalyzes three Claisen condensations, as well as beta-keto processing and methylation. Alpha-methylation step during polyketide synthesis is a prerequisite and a key checkpoint for chain transfer between PKS and NRPS modules. The downstream NRPS module contains the condensation (C), adenylation (A), and thiolation (T) domains and catalyzes the incorporation of tyrosine via the formation of the L-tyrosinyl-thioester and the amide linkage between L-tyrosinyl-thioester and the tetraketide. The bimodular assembly line is terminated with a reductase (R) domain that facilitates formation and release of the tetramic acid product. Because apdA lacks a designated enoylreductase (ER) domain, the required activity is provided the enoyl reductase apdC. ApdC appears to operate with different stereoselectivity in different PKS cycle. Combined with apdC, apdA is proposed to synthesize preaspyridone A via about 20 enzymatic steps. A number of oxidative steps performed successively by the cytochrome P450 monooxygenases apdE and apdB are required for the conversion of preaspyridone A to aspyridone A. The cytochrome P450 monooxygenase apdE is responsible for the oxidative dephenylation of preaspyridone A. Finally, the predicted FAD-dependent monooxygenase apdD and the acyl-CoA dehydrogenase apdG may be involved in the transformation of aspyridone A into aspyridone B. The protein is Trans-enoyl reductase apdC of Emericella nidulans (strain FGSC A4 / ATCC 38163 / CBS 112.46 / NRRL 194 / M139) (Aspergillus nidulans).